Here is an 815-residue protein sequence, read N- to C-terminus: uncharacterized protein (815 aa).

Residues 31 to 57 (CDMCRRKKIKCDGLRPCKNCKAGKLEC) constitute a DNA-binding region (zn(2)-C6 fungal-type). The chain crosses the membrane as a helical span at residues 560 to 580 (YWTTVYCGFSTIVTLIFAALL). Disordered stretches follow at residues 646–668 (ESNV…SNTQ) and 769–792 (DPDV…FNPT). Polar residues predominate over residues 780 to 792 (SSSLNNSTPFNPT).

It localises to the cytoplasm. Its subcellular location is the nucleus membrane. This is an uncharacterized protein from Schizosaccharomyces pombe (strain 972 / ATCC 24843) (Fission yeast).